We begin with the raw amino-acid sequence, 467 residues long: MNKGKIKQIIGSVLDIEFENGELPEIYNALEIETNVSGKKETIIAEVQTHIGGKAVRAIALSSTDGLIRGQEVSNTGKPISVPVGDATLGRIFNVLGKTIDEGPAITVKETRPIHRAAPSFDELTSKTEVFETGIKVIDLLAPYIKGGKTGLFGGAGVGKTVLIQELINNIAKQHGGFSVFAGVGERTREGNDLWREMKESGVIDKTVLCYGQMNEPPGARLRVALSALTMAEHFRDSIGTDVLLFVDNIFRFSQAGSEVSALLGRMPSAVGYQPTLSTEMGALQERITSTKKGSITSVQAIYVPADDLTDPAPANAFAHLDATTVLSRAISDKGIYPAVDPLDSTSRVMNAQVLGEEHYLVAREVQRILQRYKDLQDIIAILGMDELSEDDKVLVARARKIEKFLSQPFHVAEVFTGAPGKYVKLADTVRSFKEVISGNYDHLPEQAFYMVGSIDDAIEKAKGYKG.

Position 154 to 161 (154 to 161 (GGAGVGKT)) interacts with ATP.

This sequence belongs to the ATPase alpha/beta chains family. F-type ATPases have 2 components, CF(1) - the catalytic core - and CF(0) - the membrane proton channel. CF(1) has five subunits: alpha(3), beta(3), gamma(1), delta(1), epsilon(1). CF(0) has three main subunits: a(1), b(2) and c(9-12). The alpha and beta chains form an alternating ring which encloses part of the gamma chain. CF(1) is attached to CF(0) by a central stalk formed by the gamma and epsilon chains, while a peripheral stalk is formed by the delta and b chains.

Its subcellular location is the cell inner membrane. The enzyme catalyses ATP + H2O + 4 H(+)(in) = ADP + phosphate + 5 H(+)(out). In terms of biological role, produces ATP from ADP in the presence of a proton gradient across the membrane. The catalytic sites are hosted primarily by the beta subunits. The sequence is that of ATP synthase subunit beta from Leptospira interrogans serogroup Icterohaemorrhagiae serovar copenhageni (strain Fiocruz L1-130).